The primary structure comprises 470 residues: 3-isopropylmalate dehydratase large subunit (470 aa).

[4Fe-4S] cluster is bound by residues Cys-346, Cys-406, and Cys-409.

Belongs to the aconitase/IPM isomerase family. LeuC type 1 subfamily. As to quaternary structure, heterodimer of LeuC and LeuD. [4Fe-4S] cluster serves as cofactor.

It catalyses the reaction (2R,3S)-3-isopropylmalate = (2S)-2-isopropylmalate. The protein operates within amino-acid biosynthesis; L-leucine biosynthesis; L-leucine from 3-methyl-2-oxobutanoate: step 2/4. In terms of biological role, catalyzes the isomerization between 2-isopropylmalate and 3-isopropylmalate, via the formation of 2-isopropylmaleate. In Shouchella clausii (strain KSM-K16) (Alkalihalobacillus clausii), this protein is 3-isopropylmalate dehydratase large subunit.